A 355-amino-acid polypeptide reads, in one-letter code: Tyrosine recombinase XerC (355 aa).

The Core-binding (CB) domain maps to 4–89; it reads TQFDGDIDSF…AVRGFFAWAY (86 aa). A disordered region spans residues 137 to 181; it reads KDDGGAAAAPGSGKAAGKTADKSADTVNRSEAPARADKRDNARVT. The segment covering 141-154 has biased composition (low complexity); sequence GAAAAPGSGKAAGK. In terms of domain architecture, Tyr recombinase spans 158 to 349; the sequence is KSADTVNRSE…SIEQLKNRYG (192 aa). Positions 168–178 are enriched in basic and acidic residues; it reads APARADKRDNA. Residues Arg200, Lys224, His301, Arg304, and His327 contribute to the active site. The active-site O-(3'-phospho-DNA)-tyrosine intermediate is the Tyr336.

It belongs to the 'phage' integrase family. XerC subfamily. As to quaternary structure, forms a cyclic heterotetrameric complex composed of two molecules of XerC and two molecules of XerD.

Its subcellular location is the cytoplasm. In terms of biological role, site-specific tyrosine recombinase, which acts by catalyzing the cutting and rejoining of the recombining DNA molecules. The XerC-XerD complex is essential to convert dimers of the bacterial chromosome into monomers to permit their segregation at cell division. It also contributes to the segregational stability of plasmids. This chain is Tyrosine recombinase XerC, found in Bifidobacterium longum (strain DJO10A).